The chain runs to 96 residues: Protein RnfH (96 aa).

Belongs to the UPF0125 (RnfH) family.

The protein is Protein RnfH of Salmonella agona (strain SL483).